The chain runs to 65 residues: Chymotrypsin/elastase isoinhibitors 2 to 5 (65 aa).

5 disulfides stabilise this stretch: C4–C37, C13–C32, C16–C28, C20–C59, and C39–C53. The TIL domain occupies 4-59 (CGKNEVWTECTGCELKCGQDEKTPCALMCRPPSCECTPGRGMRRTHDGKCVPVSEC).

The protein belongs to the serine protease inhibitor-like (TIL domain-containing) family.

It localises to the secreted. Defends the organism against the host's proteinases. The sequence is that of Chymotrypsin/elastase isoinhibitors 2 to 5 from Ascaris suum (Pig roundworm).